Consider the following 61-residue polypeptide: Large ribosomal subunit protein uL30 (61 aa).

It belongs to the universal ribosomal protein uL30 family. Part of the 50S ribosomal subunit.

The sequence is that of Large ribosomal subunit protein uL30 from Thermosipho melanesiensis (strain DSM 12029 / CIP 104789 / BI429).